The following is a 360-amino-acid chain: Phospho-N-acetylmuramoyl-pentapeptide-transferase (360 aa).

A run of 10 helical transmembrane segments spans residues 21 to 41, 74 to 94, 97 to 117, 135 to 155, 168 to 188, 199 to 219, 236 to 256, 263 to 283, 288 to 308, and 338 to 358; these read YVTFRAILGLMTALVFCLWWG, MGGILILAGIFISVLLWGDLG, YVWVVLFVLASFGLIGFIDDY, ILQSLAAIIIAFYLYASADTV, IMPQMGAFFIVLAYFTIVGSS, GLAIMPTVMVAAAFALIAYLS, AGELVIVCTAIVGAGLGFLWF, VFMGDVGSLALGAALGAIAVL, ILLVIMGGVFVMETVSVILQV, and VIVRFWIISLFLVMLGLATLK.

Belongs to the glycosyltransferase 4 family. MraY subfamily. Mg(2+) is required as a cofactor.

It localises to the cell inner membrane. The enzyme catalyses UDP-N-acetyl-alpha-D-muramoyl-L-alanyl-gamma-D-glutamyl-meso-2,6-diaminopimeloyl-D-alanyl-D-alanine + di-trans,octa-cis-undecaprenyl phosphate = di-trans,octa-cis-undecaprenyl diphospho-N-acetyl-alpha-D-muramoyl-L-alanyl-D-glutamyl-meso-2,6-diaminopimeloyl-D-alanyl-D-alanine + UMP. The protein operates within cell wall biogenesis; peptidoglycan biosynthesis. Catalyzes the initial step of the lipid cycle reactions in the biosynthesis of the cell wall peptidoglycan: transfers peptidoglycan precursor phospho-MurNAc-pentapeptide from UDP-MurNAc-pentapeptide onto the lipid carrier undecaprenyl phosphate, yielding undecaprenyl-pyrophosphoryl-MurNAc-pentapeptide, known as lipid I. In Shewanella violacea (strain JCM 10179 / CIP 106290 / LMG 19151 / DSS12), this protein is Phospho-N-acetylmuramoyl-pentapeptide-transferase.